Reading from the N-terminus, the 185-residue chain is Peptidyl-tRNA hydrolase (185 aa).

Tyr-14 is a binding site for tRNA. His-19 acts as the Proton acceptor in catalysis. Positions 64, 66, and 112 each coordinate tRNA.

It belongs to the PTH family. As to quaternary structure, monomer.

Its subcellular location is the cytoplasm. The enzyme catalyses an N-acyl-L-alpha-aminoacyl-tRNA + H2O = an N-acyl-L-amino acid + a tRNA + H(+). Functionally, hydrolyzes ribosome-free peptidyl-tRNAs (with 1 or more amino acids incorporated), which drop off the ribosome during protein synthesis, or as a result of ribosome stalling. Its function is as follows. Catalyzes the release of premature peptidyl moieties from peptidyl-tRNA molecules trapped in stalled 50S ribosomal subunits, and thus maintains levels of free tRNAs and 50S ribosomes. The sequence is that of Peptidyl-tRNA hydrolase from Alkaliphilus metalliredigens (strain QYMF).